Consider the following 170-residue polypeptide: uncharacterized protein (170 aa).

This is an uncharacterized protein from Acidianus convivator (ATV).